The sequence spans 96 residues: Small ribosomal subunit protein bS6 (96 aa).

This sequence belongs to the bacterial ribosomal protein bS6 family.

Functionally, binds together with bS18 to 16S ribosomal RNA. The polypeptide is Small ribosomal subunit protein bS6 (Gloeobacter violaceus (strain ATCC 29082 / PCC 7421)).